Consider the following 575-residue polypeptide: MKSPWRILVVSPLLLLPLHSSTSRAHDNQPGTIRSDHYTCVGCVLVVSVIEQLAQVHNSTVQASMERLCSYLPEEWVLKTACYMMVHVFGADIIKLFDKDVNADVVCHTLEFCKQEPGQPLCHLYPLPKESWKFTLEKARHIVKQSPIMKYTRSGAGICSLPFLAKICQKIKLAIKNSVPIKDVDSDKYSIFPTLRGYHWRGRDCNDSDKTVYPGRRPDNWDAHRDSNCNGIWGVDPKDGIPYEKKFCEGSQPRGIILLGDSAGAHFHIPPEWLTVSQMSVNSFLNLPTAVTNELDWPQLSGTTGFLDSASKIKENSIYLRLRKRNRCNHRDYQNISKNGASSRNVKSLIESLSRNQLLDHPAIVIYAMIGNDVCNGRKTDPVSAMTTPEQLYANVLKMLEALNSHLPTGSHVILYGLAHGAFLWDTLHSRYHPLGQLNKDVTYTQLYSFLGCLQVSPCPGWMSANETLRALTSERAQQLSETLRKIAASKKFTNFNLFYLDFAFQEVVEEWQKMGGQPWELIEAVDGFHPNEVALLLFADQLWEKVQRQWPDVLGKENPFNPQIEEVFGDQGGH.

The N-terminal stretch at 1–25 is a signal peptide; the sequence is MKSPWRILVVSPLLLLPLHSSTSRA. Residues 26–34 constitute a propeptide that is removed on maturation; the sequence is HDNQPGTIR. The Saposin B-type domain maps to 36 to 117; sequence DHYTCVGCVL…HTLEFCKQEP (82 aa). Residues 37-69 are important for enzyme activity, localization to cytoplasmic vesicles, and protein stability; sequence HYTCVGCVLVVSVIEQLAQVHNSTVQASMERLC. Intrachain disulfides connect C40–C113, C43–C107, C69–C82, C122–C453, C159–C168, C205–C229, C248–C328, and C375–C459. Residue N58 is glycosylated (N-linked (GlcNAc...) asparagine). Residues 172 to 176 form a lipopolysaccharide binding region; sequence KLAIK. The Ca(2+) site is built by D183, D185, D187, Y189, D204, N206, D207, D209, V212, D222, D226, N228, N230, I232, and E244. N-linked (GlcNAc...) asparagine glycosylation is present at N206. S262 is a catalytic residue. N466 carries N-linked (GlcNAc...) asparagine glycosylation.

Heterodimer of the large and small subunits; disulfide-linked. It depends on Ca(2+) as a cofactor. In terms of processing, cleaved into a large and a small subunit. The small subunit is N-glycosylated.

The protein localises to the secreted. The protein resides in the cytoplasmic vesicle. It catalyses the reaction a 3-(acyloxy)acyl derivative of bacterial toxin + H2O = a 3-hydroxyacyl derivative of bacterial toxin + a fatty acid + H(+). Its function is as follows. Removes the secondary (acyloxyacyl-linked) fatty acyl chains from the lipid A region of bacterial lipopolysaccharides (LPS). By breaking down LPS, terminates the host response to bacterial infection and prevents prolonged and damaging inflammatory responses. In peritoneal macrophages, seems to be important for recovery from a state of immune tolerance following infection by Gram-negative bacteria. This is Acyloxyacyl hydrolase from Oryctolagus cuniculus (Rabbit).